Consider the following 98-residue polypeptide: Integration host factor subunit alpha (98 aa).

A disordered region spans residues 54-74; the sequence is LRDKSSRPGRNPKTGESVPVS.

It belongs to the bacterial histone-like protein family. As to quaternary structure, heterodimer of an alpha and a beta chain.

Functionally, this protein is one of the two subunits of integration host factor, a specific DNA-binding protein that functions in genetic recombination as well as in transcriptional and translational control. In Pasteurella multocida (strain Pm70), this protein is Integration host factor subunit alpha (ihfA).